Consider the following 238-residue polypeptide: Aspartate/glutamate leucyltransferase (238 aa).

Belongs to the R-transferase family. Bpt subfamily.

The protein localises to the cytoplasm. It carries out the reaction N-terminal L-glutamyl-[protein] + L-leucyl-tRNA(Leu) = N-terminal L-leucyl-L-glutamyl-[protein] + tRNA(Leu) + H(+). It catalyses the reaction N-terminal L-aspartyl-[protein] + L-leucyl-tRNA(Leu) = N-terminal L-leucyl-L-aspartyl-[protein] + tRNA(Leu) + H(+). Functions in the N-end rule pathway of protein degradation where it conjugates Leu from its aminoacyl-tRNA to the N-termini of proteins containing an N-terminal aspartate or glutamate. The chain is Aspartate/glutamate leucyltransferase from Aeromonas salmonicida (strain A449).